Here is an 817-residue protein sequence, read N- to C-terminus: ABC transporter G family member STR (817 aa).

The disordered stretch occupies residues 1 to 30 (MARLERDGTNKSLESLMDSHKPGGTTTNLN). The Cytoplasmic segment spans residues 1 to 542 (MARLERDGTN…RTVLNVIRTP (542 aa)). The ABC transporter domain maps to 43–294 (LEFTNLSYSI…LSGFGRPVPD (252 aa)). Position 87-94 (87-94 (GPSGAGKS)) interacts with ATP. Disordered regions lie at residues 321–349 (QYQH…RRNT), 362–395 (GFTA…LERR), and 439–463 (RPPS…GPRS). A compositionally biased stretch (polar residues) spans 362 to 375 (GFTAGTPQPDSSQF). Residues 377–388 (LDDDDNDDDENF) are compositionally biased toward acidic residues. Residues 543-563 (ELFASREIVLTVMALVLSTIF) form a helical membrane-spanning segment. At 564-579 (KNLGDTTFIDINRLLN) the chain is on the extracellular side. The chain crosses the membrane as a helical span at residues 580–600 (FYIFAVCLVFFSSNDAVPSFI). Topologically, residues 601 to 621 (MERFIFIRETSHNAYRASSYV) are cytoplasmic. The chain crosses the membrane as a helical span at residues 622–642 (ISSLIVYLPFFAVQGLTFAVI). Topologically, residues 643–657 (TKLMLHLKSNLFNFW) are extracellular. A helical membrane pass occupies residues 658 to 678 (MILFASLITTNAYVMLVSALV). The Cytoplasmic portion of the chain corresponds to 679–681 (PSY). Residues 682–702 (ITGYAVVIATTALFFLTCGFF) form a helical membrane-spanning segment. Residues 703 to 787 (LKRTQIPAYW…TMDITMESLW (85 aa)) lie on the Extracellular side of the membrane. Asn-762 carries N-linked (GlcNAc...) asparagine glycosylation. A helical transmembrane segment spans residues 788-808 (YDILILLAWGVLYRFFFYLVL). Over 809-817 (RFYSKNERK) the chain is Cytoplasmic.

This sequence belongs to the ABC transporter superfamily. ABCG family. Stunted arbuscule (STR) subfamily. As to quaternary structure, heterodimerizes with STR2; the resulting transporter is located in the peri-arbuscular membrane. As to expression, expressed constitutively in the vascular tissue of roots.

The protein localises to the cell membrane. In terms of biological role, together with STR2, required for arbuscule development in arbuscular mycorrhizal (AM) symbiosis. In Medicago truncatula (Barrel medic), this protein is ABC transporter G family member STR.